The chain runs to 440 residues: COP9 signalosome complex subunit 5 (440 aa).

An MPN domain is found at 71-218 (VLISKLSCEK…MGAFRTIESK (148 aa)). Zn(2+) is bound by residues H164, H166, and D177. The short motif at 164–177 (HSHPGYDCWLSNID) is the JAMM motif element. Polar residues predominate over residues 319 to 341 (TQRGDSTETSSFGSMFSGDNTSD). 2 disordered regions span residues 319-343 (TQRGDSTETSSFGSMFSGDNTSDVD) and 376-400 (SRSTDNFHNSKKRMNSNQEKCHDEG).

It belongs to the peptidase M67A family. CSN5 subfamily. In terms of assembly, component of a COP9 signalosome-like (CSN) complex, composed of at least RRI1/CSN5, CSN9, RRI2/CSN10, PCI8/CSN11, CSN12 and CSI1. Within this complex it probably interacts directly with CSN12. Also interacts with RPN5. The cofactor is a divalent metal cation.

The protein resides in the cytoplasm. It is found in the nucleus. Functionally, catalytic component of the COP9 signalosome (CSN) complex that acts as an regulator of the ubiquitin (Ubl) conjugation pathway by mediating the deneddylation of the cullin subunit of SCF-type E3 ubiquitin-protein ligase complexes. The CSN complex is involved in the regulation of the mating pheromone response. The sequence is that of COP9 signalosome complex subunit 5 (RRI1) from Saccharomyces cerevisiae (strain YJM789) (Baker's yeast).